Here is a 1053-residue protein sequence, read N- to C-terminus: Protein CLEC16A (1053 aa).

The FPL domain maps to 51-198; it reads IRSITEILIW…AVRTITLNVY (148 aa). 3 disordered regions span residues 375–434, 452–471, and 892–983; these read SLEM…GESE, STSV…AATC, and SSPS…SPSL. The span at 381–392 shows a compositional bias: basic residues; it reads HKGKRRVQKRPN. Residues 892–938 are compositionally biased toward low complexity; that stretch reads SSPSLSSQSPPSASGSPSGSGSTSHCDSGGTSSSSTPSTAQSPADAP.

It belongs to the CLEC16A/gop-1 family. Interacts with RNF41/NRDP1. As to expression, almost exclusively expressed in immune cells, including dendritic cells, B-lymphocytes and natural killer cells.

It is found in the endosome membrane. The protein resides in the lysosome membrane. Functionally, regulator of mitophagy through the upstream regulation of the RNF41/NRDP1-PRKN pathway. Mitophagy is a selective form of autophagy necessary for mitochondrial quality control. The RNF41/NRDP1-PRKN pathway regulates autophagosome-lysosome fusion during late mitophagy. May protect RNF41/NRDP1 from proteasomal degradation, RNF41/NRDP1 which regulates proteasomal degradation of PRKN. Plays a key role in beta cells functions by regulating mitophagy/autophagy and mitochondrial health. The sequence is that of Protein CLEC16A from Homo sapiens (Human).